Here is a 77-residue protein sequence, read N- to C-terminus: Acyl carrier protein (77 aa).

In terms of domain architecture, Carrier spans 2-77 (ASIEKRIKEI…DAIDYITDHT (76 aa)). Position 37 is an O-(pantetheine 4'-phosphoryl)serine (Ser37).

It belongs to the acyl carrier protein (ACP) family. 4'-phosphopantetheine is transferred from CoA to a specific serine of apo-ACP by AcpS. This modification is essential for activity because fatty acids are bound in thioester linkage to the sulfhydryl of the prosthetic group.

The protein resides in the cytoplasm. The protein operates within lipid metabolism; fatty acid biosynthesis. In terms of biological role, carrier of the growing fatty acid chain in fatty acid biosynthesis. The sequence is that of Acyl carrier protein from Geobacter sp. (strain M21).